A 112-amino-acid chain; its full sequence is Large ribosomal subunit protein uL24 (112 aa).

The disordered stretch occupies residues 92–112 (ERDGKQKTVRVRVSKSTGKDL).

This sequence belongs to the universal ribosomal protein uL24 family. As to quaternary structure, part of the 50S ribosomal subunit.

Its function is as follows. One of two assembly initiator proteins, it binds directly to the 5'-end of the 23S rRNA, where it nucleates assembly of the 50S subunit. Functionally, one of the proteins that surrounds the polypeptide exit tunnel on the outside of the subunit. This Kocuria rhizophila (strain ATCC 9341 / DSM 348 / NBRC 103217 / DC2201) protein is Large ribosomal subunit protein uL24.